A 592-amino-acid polypeptide reads, in one-letter code: Laccase PFICI_06862 (592 aa).

The first 19 residues, 1 to 19 (MYIQTQFASLLLLAGTSLA), serve as a signal peptide directing secretion. Asparagine 26 carries an N-linked (GlcNAc...) asparagine glycan. 2 consecutive Plastocyanin-like domains span residues 32–142 (QWSS…WIAP) and 173–350 (VVIS…RYPG). Residues histidine 78, histidine 80, histidine 123, and histidine 125 each contribute to the Cu cation site. Residues asparagine 370, asparagine 407, and asparagine 454 are each glycosylated (N-linked (GlcNAc...) asparagine). The region spanning 445–563 (SDVQGGSMQN…AGQQVVLLEG (119 aa)) is the Plastocyanin-like 3 domain. Histidine 475 lines the Cu cation pocket. Asparagine 524 is a glycosylation site (N-linked (GlcNAc...) asparagine).

It belongs to the multicopper oxidase family.

It localises to the cell surface. It functions in the pathway pigment biosynthesis; melanin biosynthesis. Laccase involved the biosynthesis of dihydroxynaphthalene (DHN)-melanin, a bluish-green pigment forming a dark layer in the conidial wall that protects the conidia from UV radiations. The first step of the pathway is the production of the pentaketide 1,3,6,8-tetrahydroxynaphthalene (1,3,6,8-THN or T4HN) by the polyketide synthase PfmaE though condensation of acetyl-CoA with malonyl-CoA. T4HN is not stable and easily oxidizes into the stable form flaviolin. T4HN is also substrate of the hydroxynaphthalene reductase PfmaG to yield scytalone. The scytalone dehydratase PfmaJ then reduces scytalone to 1,3,8-THN. 1,3,8-THN is then substrate of the hydroxynaphthalene reductase PfmaI to yield vermelone. Vermelone is further converted by the multicopper oxidase PfmaD to 1,8-DHN. Finally the laccase PFICI_06862 transforms 1,8-DHN to DHN-melanin. The roles of the 5-oxoprolinase PfmaA and the proline iminopeptidase PfmaB within the cluster have not been elucidated yet. The polypeptide is Laccase PFICI_06862 (Pestalotiopsis fici (strain W106-1 / CGMCC3.15140)).